The primary structure comprises 476 residues: Cysteine--tRNA ligase (476 aa).

Cys28 serves as a coordination point for Zn(2+). Positions Pro30 to His40 match the 'HIGH' region motif. Residues Cys208, His233, and Glu237 each contribute to the Zn(2+) site. The 'KMSKS' region motif lies at Lys265–Ser269. Lys268 provides a ligand contact to ATP.

This sequence belongs to the class-I aminoacyl-tRNA synthetase family. Zn(2+) is required as a cofactor.

Its subcellular location is the cytoplasm. The enzyme catalyses tRNA(Cys) + L-cysteine + ATP = L-cysteinyl-tRNA(Cys) + AMP + diphosphate. This chain is Cysteine--tRNA ligase, found in Methanococcus maripaludis (strain C6 / ATCC BAA-1332).